Here is a 219-residue protein sequence, read N- to C-terminus: GTP-binding nuclear protein GSP1/CNR1 (219 aa).

Ser-2 carries the post-translational modification N-acetylserine. Ser-2 bears the Phosphoserine mark. Residues 9 to 173 (EVPTFKLVLV…LWLARKLAGN (165 aa)) enclose the Small GTPase Ran-type domain. 20–27 (DGGTGKTT) contacts GTP. A switch-I region spans residues 39–47 (KKYIATIGV). Residues Gly-70, 124-127 (NKVD), and 152-154 (SAK) each bind GTP. The segment at 70 to 86 (GQEKFGGLRDGYYINAQ) is switch-II.

It belongs to the small GTPase superfamily. Ran family. In terms of assembly, found in a nuclear export complex with RanGTP, exportin and pre-miRNA. Forms a complex with YRB1. Interacts with BUD5, CEX1, RRP12, SRM1, and DIS3/RRP44.

The protein localises to the nucleus. Functionally, GTP-binding protein involved in nucleocytoplasmic transport. Required for the import of protein into the nucleus and also for RNA export. Essential for cell viability. By analogy with Ras, Ran may be activated when GTP is exchanged for bound GDP by RCC1 and inactivated when GTP is hydrolyzed by Ran upon activation by RanGAP1. The chain is GTP-binding nuclear protein GSP1/CNR1 (GSP1) from Saccharomyces cerevisiae (strain ATCC 204508 / S288c) (Baker's yeast).